Consider the following 2226-residue polypeptide: Rotatin (2226 aa).

Residues 295-346 (EARGPYHSPNPSPGSSSSRPSVVGRTGQRPRGDGQDWDAVSSSGSSSHTHVN) are disordered. A compositionally biased stretch (low complexity) spans 307–319 (PGSSSSRPSVVGR). Ser311 is modified (phosphoserine). Lys813 bears the N6-acetyllysine mark.

Belongs to the rotatin family. Interacts with PPP1R35; this interaction allows the mutual recruitment to the centriole.

The protein localises to the cytoplasm. The protein resides in the cytoskeleton. It localises to the cilium basal body. In terms of biological role, involved in the genetic cascade that governs left-right specification. Required for correct asymmetric expression of NODAL, LEFTY and PITX2. This Mus musculus (Mouse) protein is Rotatin.